Here is a 359-residue protein sequence, read N- to C-terminus: Phospho-N-acetylmuramoyl-pentapeptide-transferase (359 aa).

Transmembrane regions (helical) follow at residues 3–23 (QILIAVGLALAVSILLTPVLI), 55–75 (VAILAGIWVSYLGTHLVGLAL), 84–104 (GLLVLGLATALGIVGFIDDLI), 120–140 (TVGILAAALLFGVLALQFGNA), 156–176 (IATVTLAPLIFVLFCVVLVSA), 187–207 (LDGLAAGAMAMVCAAYVLITF), 231–251 (LALVAAAAAGACIGFLWWNAA), 255–275 (IFMGDTGSLALGGIIAGLSVT), 280–300 (ILAVVLGALFVAEVTSVVVQI), and 334–354 (FWLLTAIACGLGVALFYGEWL).

This sequence belongs to the glycosyltransferase 4 family. MraY subfamily. It depends on Mg(2+) as a cofactor.

It is found in the cell membrane. The enzyme catalyses UDP-N-acetyl-alpha-D-muramoyl-L-alanyl-gamma-D-glutamyl-meso-2,6-diaminopimeloyl-D-alanyl-D-alanine + di-trans,octa-cis-undecaprenyl phosphate = di-trans,octa-cis-undecaprenyl diphospho-N-acetyl-alpha-D-muramoyl-L-alanyl-D-glutamyl-meso-2,6-diaminopimeloyl-D-alanyl-D-alanine + UMP. It participates in cell wall biogenesis; peptidoglycan biosynthesis. In terms of biological role, catalyzes the initial step of the lipid cycle reactions in the biosynthesis of the cell wall peptidoglycan: transfers peptidoglycan precursor phospho-MurNAc-pentapeptide from UDP-MurNAc-pentapeptide onto the lipid carrier undecaprenyl phosphate, yielding undecaprenyl-pyrophosphoryl-MurNAc-pentapeptide, known as lipid I. The chain is Phospho-N-acetylmuramoyl-pentapeptide-transferase from Mycobacterium sp. (strain JLS).